We begin with the raw amino-acid sequence, 418 residues long: Histidine--tRNA ligase (418 aa).

The protein belongs to the class-II aminoacyl-tRNA synthetase family.

It is found in the cytoplasm. It carries out the reaction tRNA(His) + L-histidine + ATP = L-histidyl-tRNA(His) + AMP + diphosphate + H(+). The protein is Histidine--tRNA ligase of Methanococcus maripaludis (strain C7 / ATCC BAA-1331).